Consider the following 162-residue polypeptide: Cyclic pyranopterin monophosphate synthase (162 aa).

Residues 75–77 (MCH) and 115–116 (ME) contribute to the substrate site. Asp-130 is a catalytic residue.

The protein belongs to the MoaC family. As to quaternary structure, homohexamer; trimer of dimers.

The enzyme catalyses (8S)-3',8-cyclo-7,8-dihydroguanosine 5'-triphosphate = cyclic pyranopterin phosphate + diphosphate. The protein operates within cofactor biosynthesis; molybdopterin biosynthesis. Functionally, catalyzes the conversion of (8S)-3',8-cyclo-7,8-dihydroguanosine 5'-triphosphate to cyclic pyranopterin monophosphate (cPMP). This chain is Cyclic pyranopterin monophosphate synthase, found in Geobacillus kaustophilus (strain HTA426).